The sequence spans 329 residues: G-protein coupled bile acid receptor 1 (329 aa).

Residues 1-15 lie on the Extracellular side of the membrane; sequence MMTPNSTELSAIPMG. N-linked (GlcNAc...) asparagine glycosylation is present at N5. Residues 16-36 form a helical membrane-spanning segment; that stretch reads VLGLSLALASLIVIANLLLAL. Residues 37-49 lie on the Cytoplasmic side of the membrane; the sequence is GIALDRHLRSPPA. The helical transmembrane segment at 50–70 threads the bilayer; that stretch reads GCFFLSLLLAGLLTGLALPML. Residues 71-84 are Extracellular-facing; that stretch reads PGLWSRNHQGYWSC. Residues C84 and C154 are joined by a disulfide bond. A helical membrane pass occupies residues 85-105; that stretch reads LLLHLTPNFCFLSLLANLLLV. Over 106–124 the chain is Cytoplasmic; sequence HGERYMAVLQPLRPHGSVR. The chain crosses the membrane as a helical span at residues 125 to 145; sequence LALFLTWVSSLFFASLPALGW. Over 146-164 the chain is Extracellular; sequence NHWSPDANCSSQAVFPAPY. Residue N153 is glycosylated (N-linked (GlcNAc...) asparagine). Residues 165 to 185 traverse the membrane as a helical segment; the sequence is LYLEVYGLLLPAVGATALLSV. At 186-229 the chain is on the cytoplasmic side; that stretch reads RVLATAHRQLCEIRRLERAVCRDVPSTLARALTWRQARAQAGAT. The chain crosses the membrane as a helical span at residues 230-250; sequence LLFLLCWGPYVATLLLSVLAY. At 251-260 the chain is on the extracellular side; the sequence is ERRPPLGPGT. Residues 261–281 form a helical membrane-spanning segment; it reads LLSLISLGSTSAAAVPVAMGL. Residues 282 to 329 are Cytoplasmic-facing; the sequence is GDQRYTAPWRTAAQRCLRVLRGRAKRDNPGPSTAYHTSSQCSIDLDLN.

The protein belongs to the G-protein coupled receptor 1 family.

It localises to the cell membrane. Its function is as follows. Receptor for bile acid. Bile acid-binding induces its internalization, activation of extracellular signal-regulated kinase and intracellular cAMP production. May be involved in the suppression of macrophage functions by bile acids. Involved in bile acid promoted GLP1R secretion. The chain is G-protein coupled bile acid receptor 1 (Gpbar1) from Mus musculus (Mouse).